The sequence spans 329 residues: Beta-ketoacyl-[acyl-carrier-protein] synthase III (329 aa).

Residues C114 and H254 contribute to the active site. Residues Q255 to R259 are ACP-binding. N284 is an active-site residue.

The protein belongs to the thiolase-like superfamily. FabH family. In terms of assembly, homodimer.

Its subcellular location is the cytoplasm. It catalyses the reaction malonyl-[ACP] + acetyl-CoA + H(+) = 3-oxobutanoyl-[ACP] + CO2 + CoA. The protein operates within lipid metabolism; fatty acid biosynthesis. Its function is as follows. Catalyzes the condensation reaction of fatty acid synthesis by the addition to an acyl acceptor of two carbons from malonyl-ACP. Catalyzes the first condensation reaction which initiates fatty acid synthesis and may therefore play a role in governing the total rate of fatty acid production. Possesses both acetoacetyl-ACP synthase and acetyl transacylase activities. Its substrate specificity determines the biosynthesis of branched-chain and/or straight-chain of fatty acids. The polypeptide is Beta-ketoacyl-[acyl-carrier-protein] synthase III (Roseiflexus sp. (strain RS-1)).